The sequence spans 212 residues: Ribosome maturation factor RimM (212 aa).

A PRC barrel domain is found at 105–181; that stretch reads EEEFYYADLI…IDSITAGLDN (77 aa). Positions 181 to 212 are disordered; sequence NAELSGEEDEAEGPESARGSRPRGPKSAGEPR.

It belongs to the RimM family. In terms of assembly, binds ribosomal protein uS19.

Its subcellular location is the cytoplasm. An accessory protein needed during the final step in the assembly of 30S ribosomal subunit, possibly for assembly of the head region. Essential for efficient processing of 16S rRNA. May be needed both before and after RbfA during the maturation of 16S rRNA. It has affinity for free ribosomal 30S subunits but not for 70S ribosomes. In Chelativorans sp. (strain BNC1), this protein is Ribosome maturation factor RimM.